A 217-amino-acid chain; its full sequence is 3,4-dihydroxy-2-butanone 4-phosphate synthase (217 aa).

D-ribulose 5-phosphate contacts are provided by residues Arg37–Glu38, Asp42, Arg150–Thr154, and Glu174. Residue Glu38 coordinates Mg(2+). Residue His153 coordinates Mg(2+).

The protein belongs to the DHBP synthase family. As to quaternary structure, homodimer. Requires Mg(2+) as cofactor. It depends on Mn(2+) as a cofactor.

It carries out the reaction D-ribulose 5-phosphate = (2S)-2-hydroxy-3-oxobutyl phosphate + formate + H(+). Its pathway is cofactor biosynthesis; riboflavin biosynthesis; 2-hydroxy-3-oxobutyl phosphate from D-ribulose 5-phosphate: step 1/1. In terms of biological role, catalyzes the conversion of D-ribulose 5-phosphate to formate and 3,4-dihydroxy-2-butanone 4-phosphate. The protein is 3,4-dihydroxy-2-butanone 4-phosphate synthase of Shewanella oneidensis (strain ATCC 700550 / JCM 31522 / CIP 106686 / LMG 19005 / NCIMB 14063 / MR-1).